Reading from the N-terminus, the 158-residue chain is C-type natriuretic peptide 3 (158 aa).

A signal peptide spans 1–21 (MSLNLPGYALFFILLVASSGA). Residues 22 to 136 (KPAPDLQILE…SKRSRSRYKK (115 aa)) constitute a propeptide that is removed on maturation. Positions 32–95 (PPLSSLEEQE…EVQERGRGTG (64 aa)) are disordered. Residues 47-64 (VQEKVQEQQEEVQEKVQE) show a composition bias toward basic and acidic residues. A compositionally biased stretch (acidic residues) spans 65 to 86 (QQEEVQEQQEEVQEQQEEQQEE). A disulfide bond links C142 and C158.

The protein belongs to the natriuretic peptide family.

It localises to the secreted. Exhibits natriuretic and vasodepressant activity. Has cGMP-stimulating activity. May help to regulate body fluid homeostasis in a variety of aquatic environments. The protein is C-type natriuretic peptide 3 of Takifugu rubripes (Japanese pufferfish).